The chain runs to 179 residues: MARLKEIYRNEIAPKLKEELKLSNVMEVPRVTKITLNMGLGEAIGDKKVIEHAVADLEKITGQKPVVTFARKSIAGFKVREGWPIGVKVTLRRDKMYEFLDRLLAISLPRVRDFRGLNAKSFDGRGNYSMGVKEQIIFPEIDYDKIDALRGLDITLTTTARSDDEGRALLRAFKFPFRN.

The protein belongs to the universal ribosomal protein uL5 family. Part of the 50S ribosomal subunit; part of the 5S rRNA/L5/L18/L25 subcomplex. Contacts the 5S rRNA and the P site tRNA. Forms a bridge to the 30S subunit in the 70S ribosome.

Functionally, this is one of the proteins that bind and probably mediate the attachment of the 5S RNA into the large ribosomal subunit, where it forms part of the central protuberance. In the 70S ribosome it contacts protein S13 of the 30S subunit (bridge B1b), connecting the 2 subunits; this bridge is implicated in subunit movement. Contacts the P site tRNA; the 5S rRNA and some of its associated proteins might help stabilize positioning of ribosome-bound tRNAs. In Pseudomonas entomophila (strain L48), this protein is Large ribosomal subunit protein uL5.